We begin with the raw amino-acid sequence, 290 residues long: Sodium/potassium-transporting ATPase subunit beta-2 (290 aa).

Residues 1–39 (MVIQKEKKSCGQVVEEWKEFVWNPRTHQFMGRTGTSWAF) are Cytoplasmic-facing. A helical; Signal-anchor for type II membrane protein membrane pass occupies residues 40 to 67 (ILLFYLVFYGFLTAMFTLTMWVMLQTVS). Residues 68–290 (DHTPKYQDRL…VAFKLRINKT (223 aa)) lie on the Extracellular side of the membrane. N-linked (GlcNAc...) asparagine glycosylation is found at Asn96 and Asn118. A disulfide bridge connects residues Cys129 and Cys150. Residues Asn153 and Asn159 are each glycosylated (N-linked (GlcNAc...) asparagine). Residues Cys160 and Cys177 are joined by a disulfide bond. Residues Asn193, Asn197, and Asn238 are each glycosylated (N-linked (GlcNAc...) asparagine). The tract at residues 193 to 290 (NQSMNVTCAG…VAFKLRINKT (98 aa)) is immunoglobulin-like. Cys200 and Cys261 are joined by a disulfide.

This sequence belongs to the X(+)/potassium ATPases subunit beta family. The sodium/potassium-transporting ATPase is composed of a catalytic alpha subunit, an auxiliary non-catalytic beta subunit and an additional regulatory subunit. Interacts with isoform 2 of BSG.

The protein resides in the cell membrane. Its function is as follows. This is the non-catalytic component of the active enzyme, which catalyzes the hydrolysis of ATP coupled with the exchange of Na(+) and K(+) ions across the plasma membrane. The exact function of the beta-2 subunit is not known. In terms of biological role, mediates cell adhesion of neurons and astrocytes, and promotes neurite outgrowth. In Homo sapiens (Human), this protein is Sodium/potassium-transporting ATPase subunit beta-2 (ATP1B2).